Reading from the N-terminus, the 202-residue chain is uncharacterized protein (202 aa).

K136 participates in a covalent cross-link: Isoglutamyl lysine isopeptide (Lys-Gln) (interchain with Q-Cter in protein Pup).

This is an uncharacterized protein from Mycobacterium tuberculosis (strain ATCC 25618 / H37Rv).